A 133-amino-acid polypeptide reads, in one-letter code: UPF0225 protein BPP1723 (133 aa).

Belongs to the UPF0225 family.

The sequence is that of UPF0225 protein BPP1723 from Bordetella parapertussis (strain 12822 / ATCC BAA-587 / NCTC 13253).